A 320-amino-acid chain; its full sequence is Ferrochelatase (320 aa).

Positions 194 and 275 each coordinate Fe cation.

It belongs to the ferrochelatase family. Monomer.

Its subcellular location is the cytoplasm. The catalysed reaction is heme b + 2 H(+) = protoporphyrin IX + Fe(2+). It functions in the pathway porphyrin-containing compound metabolism; protoheme biosynthesis; protoheme from protoporphyrin-IX: step 1/1. Functionally, catalyzes the ferrous insertion into protoporphyrin IX. The sequence is that of Ferrochelatase from Escherichia coli O9:H4 (strain HS).